A 394-amino-acid chain; its full sequence is DNA replication and repair protein RecF (394 aa).

Residue 30–37 (GRNGFGKT) participates in ATP binding.

The protein belongs to the RecF family.

The protein localises to the cytoplasm. Functionally, the RecF protein is involved in DNA metabolism; it is required for DNA replication and normal SOS inducibility. RecF binds preferentially to single-stranded, linear DNA. It also seems to bind ATP. This chain is DNA replication and repair protein RecF, found in Corynebacterium glutamicum (strain R).